The chain runs to 154 residues: 6,7-dimethyl-8-ribityllumazine synthase (154 aa).

5-amino-6-(D-ribitylamino)uracil is bound by residues phenylalanine 22, 56 to 58 (SFE), and 80 to 82 (AVI). 85 to 86 (ST) contacts (2S)-2-hydroxy-3-oxobutyl phosphate. The active-site Proton donor is the histidine 88. Residue tyrosine 113 coordinates 5-amino-6-(D-ribitylamino)uracil. Arginine 127 contacts (2S)-2-hydroxy-3-oxobutyl phosphate.

This sequence belongs to the DMRL synthase family. Forms an icosahedral capsid composed of 60 subunits, arranged as a dodecamer of pentamers.

It catalyses the reaction (2S)-2-hydroxy-3-oxobutyl phosphate + 5-amino-6-(D-ribitylamino)uracil = 6,7-dimethyl-8-(1-D-ribityl)lumazine + phosphate + 2 H2O + H(+). It participates in cofactor biosynthesis; riboflavin biosynthesis; riboflavin from 2-hydroxy-3-oxobutyl phosphate and 5-amino-6-(D-ribitylamino)uracil: step 1/2. Catalyzes the formation of 6,7-dimethyl-8-ribityllumazine by condensation of 5-amino-6-(D-ribitylamino)uracil with 3,4-dihydroxy-2-butanone 4-phosphate. This is the penultimate step in the biosynthesis of riboflavin. The chain is 6,7-dimethyl-8-ribityllumazine synthase from Persephonella marina (strain DSM 14350 / EX-H1).